A 416-amino-acid chain; its full sequence is L-cysteine:1D-myo-inositol 2-amino-2-deoxy-alpha-D-glucopyranoside ligase (416 aa).

Residue Cys45 participates in Zn(2+) binding. L-cysteinyl-5'-AMP-binding positions include 45 to 48 (CGIT), Thr60, and 83 to 85 (NVT). Positions 47-57 (ITPYDSTHLGH) match the 'HIGH' region motif. The short motif at 191–196 (ERGGDP) is the 'ERGGDP' region element. L-cysteinyl-5'-AMP is bound at residue Trp232. Cys236 provides a ligand contact to Zn(2+). 254–256 (GSD) is an L-cysteinyl-5'-AMP binding site. His261 lines the Zn(2+) pocket. Val286 is a binding site for L-cysteinyl-5'-AMP. A 'KMSKS' region motif is present at residues 292 to 296 (KMSKS).

This sequence belongs to the class-I aminoacyl-tRNA synthetase family. MshC subfamily. Monomer. It depends on Zn(2+) as a cofactor.

The catalysed reaction is 1D-myo-inositol 2-amino-2-deoxy-alpha-D-glucopyranoside + L-cysteine + ATP = 1D-myo-inositol 2-(L-cysteinylamino)-2-deoxy-alpha-D-glucopyranoside + AMP + diphosphate + H(+). Its function is as follows. Catalyzes the ATP-dependent condensation of GlcN-Ins and L-cysteine to form L-Cys-GlcN-Ins. The polypeptide is L-cysteine:1D-myo-inositol 2-amino-2-deoxy-alpha-D-glucopyranoside ligase (Brachybacterium faecium (strain ATCC 43885 / DSM 4810 / JCM 11609 / LMG 19847 / NBRC 14762 / NCIMB 9860 / 6-10)).